The sequence spans 131 residues: Profilin-2 (131 aa).

Cys-13 and Cys-115 form a disulfide bridge. The Involved in PIP2 interaction motif lies at 81–97 (AVIRGKKGSGGITVKKT). Phosphothreonine is present on Thr-111.

Belongs to the profilin family. As to quaternary structure, occurs in many kinds of cells as a complex with monomeric actin in a 1:1 ratio. Post-translationally, phosphorylated by MAP kinases. In terms of tissue distribution, pollen specific.

Its subcellular location is the cytoplasm. It is found in the cytoskeleton. Functionally, binds to actin and affects the structure of the cytoskeleton. At high concentrations, profilin prevents the polymerization of actin, whereas it enhances it at low concentrations. By binding to PIP2, it inhibits the formation of IP3 and DG. The polypeptide is Profilin-2 (PRO2) (Zea mays (Maize)).